A 474-amino-acid polypeptide reads, in one-letter code: tRNA modification GTPase MnmE (474 aa).

(6S)-5-formyl-5,6,7,8-tetrahydrofolate is bound by residues arginine 23, glutamate 86, and lysine 125. The 176-residue stretch at 221–396 folds into the TrmE-type G domain; that stretch reads GIPVAIVGEP…LKEKLLEYVN (176 aa). Asparagine 231 contacts K(+). GTP is bound by residues 231–236, 250–256, and 275–278; these read NVGKST, SEIAGTT, and DTAG. Serine 235 is a Mg(2+) binding site. Serine 250, isoleucine 252, and threonine 255 together coordinate K(+). Threonine 256 is a Mg(2+) binding site. Residue lysine 474 participates in (6S)-5-formyl-5,6,7,8-tetrahydrofolate binding.

This sequence belongs to the TRAFAC class TrmE-Era-EngA-EngB-Septin-like GTPase superfamily. TrmE GTPase family. As to quaternary structure, homodimer. Heterotetramer of two MnmE and two MnmG subunits. The cofactor is K(+).

The protein localises to the cytoplasm. In terms of biological role, exhibits a very high intrinsic GTPase hydrolysis rate. Involved in the addition of a carboxymethylaminomethyl (cmnm) group at the wobble position (U34) of certain tRNAs, forming tRNA-cmnm(5)s(2)U34. In Christiangramia forsetii (strain DSM 17595 / CGMCC 1.15422 / KT0803) (Gramella forsetii), this protein is tRNA modification GTPase MnmE.